Reading from the N-terminus, the 619-residue chain is DNA mismatch repair protein MutL (619 aa).

The span at 368-378 shows a compositional bias: basic and acidic residues; that stretch reads VDEPKQVDEPK. Residues 368 to 403 are disordered; the sequence is VDEPKQVDEPKQSSPVQEPKEEIPSFLPTVESKQND.

It belongs to the DNA mismatch repair MutL/HexB family.

This protein is involved in the repair of mismatches in DNA. It is required for dam-dependent methyl-directed DNA mismatch repair. May act as a 'molecular matchmaker', a protein that promotes the formation of a stable complex between two or more DNA-binding proteins in an ATP-dependent manner without itself being part of a final effector complex. This is DNA mismatch repair protein MutL from Geobacillus sp. (strain WCH70).